Consider the following 1705-residue polypeptide: Protein TIC 214 (1705 aa).

5 consecutive transmembrane segments (helical) span residues 18 to 38 (IINS…FSIG), 67 to 87 (FITG…HLAL), 127 to 147 (LSIQ…HFIL), 175 to 195 (VGWI…LVWI), and 218 to 238 (SMSM…HYLG).

Belongs to the TIC214 family. As to quaternary structure, part of the Tic complex.

It localises to the plastid. The protein resides in the chloroplast inner membrane. Involved in protein precursor import into chloroplasts. May be part of an intermediate translocation complex acting as a protein-conducting channel at the inner envelope. This chain is Protein TIC 214, found in Helianthus annuus (Common sunflower).